We begin with the raw amino-acid sequence, 264 residues long: Thymidylate synthase (264 aa).

Arginine 21 serves as a coordination point for dUMP. Histidine 51 is a (6R)-5,10-methylene-5,6,7,8-tetrahydrofolate binding site. Arginine 126 to arginine 127 serves as a coordination point for dUMP. Catalysis depends on cysteine 146, which acts as the Nucleophile. Residues arginine 166–aspartate 169, asparagine 177, and histidine 207–tyrosine 209 contribute to the dUMP site. Aspartate 169 contributes to the (6R)-5,10-methylene-5,6,7,8-tetrahydrofolate binding site. Alanine 263 is a binding site for (6R)-5,10-methylene-5,6,7,8-tetrahydrofolate.

Belongs to the thymidylate synthase family. Bacterial-type ThyA subfamily. As to quaternary structure, homodimer.

It localises to the cytoplasm. It catalyses the reaction dUMP + (6R)-5,10-methylene-5,6,7,8-tetrahydrofolate = 7,8-dihydrofolate + dTMP. The protein operates within pyrimidine metabolism; dTTP biosynthesis. Catalyzes the reductive methylation of 2'-deoxyuridine-5'-monophosphate (dUMP) to 2'-deoxythymidine-5'-monophosphate (dTMP) while utilizing 5,10-methylenetetrahydrofolate (mTHF) as the methyl donor and reductant in the reaction, yielding dihydrofolate (DHF) as a by-product. This enzymatic reaction provides an intracellular de novo source of dTMP, an essential precursor for DNA biosynthesis. The sequence is that of Thymidylate synthase from Cytophaga hutchinsonii (strain ATCC 33406 / DSM 1761 / CIP 103989 / NBRC 15051 / NCIMB 9469 / D465).